The sequence spans 2280 residues: MRGHQFKSWIFELREILREIKNSHHFLDSWTQFNSVGSFIHIFFHQERFLKLFDPRIWSILLSRNSQGSTSNRYFTIKGVILFVVAVLIYRINNRNMVERKNLYLIGLLPIPMNSIGPRNDTLEESVGSSNINRLIVSLLYLPKGKKISESCFLNPKESTWVLPITKKCSMPESNWGSRWWRNWIGKKRDSSCKISNETVAGIEILFKEKDLKYLEFLFVYYMDDPIRKDHDWELFDRLSLRKSRNRINLNSGPLFEILVKHWISYLMSAFREKIPIEVEGFFKQQGAGSTIQSNDIEHVSHLFSRNKWAISLQNCAQFHMWQFRQDLFVSWGKNPPESDFLRNVSRENWIWLDNVWLVNKDRFFSKVQNVSSNIQYDSTRSSFVQVTDSSQLKGSSDQSRDHLDSISNEDSEYHTLINQREIQQRKERSILWDPSFLQTERKEIESGRFPKCLSGYSSMSRLFTEREKQMINHLFPEEIEEFLGNPTRSVRSFFSDRWSELHLGSNPTERSTRDQKLLKKQQDLSFVPSRRSENKEMVNIFKIITYLQNTVSIHPISSDPGCDMVPKDEPDMDSSNKISFLNKNPFFDLFHLFHDRNRGGYTLHYDFESEERFQEMADLFTLSITEPDLVYHKGFAFSIDSCGLDQKQFLNEARDESKKKSLLVLPPIFYEENESFSRRIRKKWVRISCGNDLEDPKPKIVVFASNNIMEAVTQYRLIRNLIQIQYSTYGYIRNVLNRFFLMNRSDRNFEYGIQRDQIGKDTLNHRTIMKYTINQYLSNLKKSQKKWFEPLILISRTERSMNRDPDAYRYKWSNGSKNFQEHLEQSVSEQKSRFQVVFDRLRINQYSIDWSEVIDKKDLSKPLRFFLSKSLLFLSKLLFFLSNSLPFFCVSFGNIPIHRSEIYIYELKGPNDQLCNQLLESIGLQIVHLKKWKPFLLDDHDTSQKSKFLINGGTISPFLFNKIPKWMIDSFHTRNNRRKSFDNPDSYFSMIFHDQDNWLNPVKPFHRSSLISSFYKANRLRFLNNPHHFCFYWNTRFPFSVEKPRINNSDFTYGQFLNILFIRNKIFSLCVGKKKHAFWGRDTISPIESQVSNIFIPNDFPQSGDETYNLYKSFHFPSRSDPFVRRAIYSIADISGTPLTEGQIVNFERTYCQPLSDMNLSDSEGKNLHQYLNFNSNMGLIHTPCSEKDLSSEKRKKRSLCLKKCVEKGQMYRTFQRDSAFSTLSKWNLFQTYMPWFLTSTGYKYLNFIFLDTFSDLLPILSSSQKFVSIFHDIMHGSGISWRILQKKLCLPQWNLISEISSKCLHNLLLSEEMIHRNNESSLISTHLRSPNAREFLYSILFLLLVAGYLVRTHLLFVSRASSELQTEFEKVKSLMIPSSMIELRKLLDRYPTSEPNSFWLKNLFLVALEQLGDSLEEIRGSASGGNMLGPAYGVKSIRSKKKDWNINLIEIIDLIPNPINRITFSRNTRHLSHTSKEIYSLIRKRKNVNGDWIDDKIESWVANSDSIDDEEREFLVQFSTLTTENRIDQILLSLTHSDRLSKNDSGYQMIEQPGAIYLRYLVDIHKKHLMNYEFNPSCLAERRIFLAHYQTITYSQTSCGENSFHFPSHGKPFSLRLALSPSRGILVIGSIGTGRSYLVKYLATNSYVPFITVFLNKFLDNKPKGFLLDEIDIDDSDDIDDSANLDASDDIDRDLDTELELLTRMNGLTMDMMPEIDRFYITLQFELAKAMSPCIIWIPNIHDLDVNESNDLALGLLVNHLSRDCERCSTRNILVIASTHIPQKVDPALIAPNKLNTCIKIRRLLLPQQRKHFFTLSYTRGFHLEKKMFHTNGFGSITMGSNARDLVALTNEVLSISITQKKSIIDTNTIRSALHRQTWDLRSQVRSVQDHGILFYQIGRAVAQNVLLSNCPIDPISIYMKKKSCNEGDSYLYKWYFELGTSMKRLTILLYLLSCSAGSVAQDLWSLSGPDEKNGITSYGLVENDSDLVHGLLEVEGALVGSSRTEKDCSQFDNDRVTLLLRPEPRNPLDMMQNGSCSILDQRFLYEKYESEFEEGEGEGALDPQEDLFNHIVWAPRIWRPWGFLFDCIERPNELGFPYWSRSFRGKRIIYDEEDELQENDSEFLQSGTMQYQTRDRSSKEQGLFRISQFIWDPADPLFFLFKDQPPGSVFSHRELFADEEMSKGLLTSQTDPPTSIYKRWFIKNTQEKHFELLINRQRWLRTNSSLSNGSFRSNTLSESYQYLSNLFLSNGTLLDQMTKTLLRKRWLFPDEMKIGFM.

Residue 1631–1638 participates in ATP binding; that stretch reads GSIGTGRS.

Belongs to the Ycf2 family.

The protein localises to the plastid. It localises to the chloroplast stroma. Functionally, probable ATPase of unknown function. Its presence in a non-photosynthetic plant (Epifagus virginiana) and experiments in tobacco indicate that it has an essential function which is probably not related to photosynthesis. This is Protein Ycf2 from Nicotiana tomentosiformis (Tobacco).